Consider the following 448-residue polypeptide: MGPPPAARRREGEPDNQDPAGLLTDKYELTMLAAALRDGSANRPTTFEVFARRLPTGRRYGVVAGTGRLLEALPQFRFDADACELLAQFLDPATVRYLREFRFRGDIDGYAEGELYFPGSPVLSVRGSFAECVLLETLVLSIFNHDTAIASAAARMVSAAGGRPLIEMGSRRTHERAAVAAARAAYIAGFAASSNLAAQRRYGVPAHGTAAHAFTMLHAQHGGPTELAERAAFRAQVEALGPGTTLLVDTYDVTTGVANAVAAAGAELGAIRIDSGELGVLARQAREQLDRLGATRTRIVVSGDLDEFSIAALRGEPVDSYGVGTSLVTGSGAPTANMVYKLVEVDGVPVQKRSSYKESPGGRKEALRRSRATGTITEELVHPAGRPPVIVEPHRVLTLPLVRAGQPVADTSLAAARQLVASGLRSLPGDGLKLAPGEPAIPTRTIPA.

The disordered stretch occupies residues 1–21; it reads MGPPPAARRREGEPDNQDPAG. His-212 bears the Phosphohistidine mark. Residues 353 to 372 form a disordered region; the sequence is RSSYKESPGGRKEALRRSRA.

It belongs to the NAPRTase family. Post-translationally, transiently phosphorylated on a His residue during the reaction cycle. Phosphorylation strongly increases the affinity for substrates and increases the rate of nicotinate D-ribonucleotide production. Dephosphorylation regenerates the low-affinity form of the enzyme, leading to product release.

It carries out the reaction nicotinate + 5-phospho-alpha-D-ribose 1-diphosphate + ATP + H2O = nicotinate beta-D-ribonucleotide + ADP + phosphate + diphosphate. Its pathway is cofactor biosynthesis; NAD(+) biosynthesis; nicotinate D-ribonucleotide from nicotinate: step 1/1. Involved in the Preiss-Handler pathway, which is a recycling route that permits the salvage of free nicotinamide (NM) and nicotinic acid (Na) involved in the NAD biosynthesis. Catalyzes the synthesis of beta-nicotinate D-ribonucleotide from nicotinate and 5-phospho-D-ribose 1-phosphate at the expense of ATP. It is not able to use nicotinamide. PncB1 contributes to basal NAD level. The protein is Nicotinate phosphoribosyltransferase pncB1 (pncB1) of Mycobacterium tuberculosis (strain ATCC 25618 / H37Rv).